We begin with the raw amino-acid sequence, 1033 residues long: Tyrosine-protein kinase-like otk (1033 aa).

A signal peptide spans 1–22 (MTARMISIYGLVLASMMASVLA). Over 23-581 (SSSRFQRLPQ…GGDGFLVTRA (559 aa)) the chain is Extracellular. Ig-like C2-type domains are found at residues 25–114 (SRFQ…AKLS), 113–199 (LSVI…RVMS), 251–365 (PEDL…VPVS), 368–463 (PGVL…VAIN), and 468–558 (PKFS…VQLI). Asn39 carries N-linked (GlcNAc...) asparagine glycosylation. Cystine bridges form between Cys46-Cys95, Cys137-Cys188, Cys276-Cys354, and Cys399-Cys447. Residues Asn336, Asn417, Asn429, Asn444, Asn457, Asn512, and Asn524 are each glycosylated (N-linked (GlcNAc...) asparagine). The cysteines at positions 490 and 542 are disulfide-linked. Residues 582-602 (VLITMTVALAYIVLVVGLMLW) form a helical membrane-spanning segment. Residues 603 to 1033 (CRYRRQARKA…LSKAMQSAEK (431 aa)) lie on the Cytoplasmic side of the membrane. 2 disordered regions span residues 617–679 (LSTK…KKSA) and 718–760 (SPSD…KTSM). Residues 655 to 673 (KSSGDAQKSDDTACSQQSR) are compositionally biased toward polar residues. Ser678 is modified (phosphoserine). Residues 692–1028 (LSELIQIGRG…QLGAALSKAM (337 aa)) enclose the Protein kinase; inactive domain. The segment covering 720-731 (SDKDADTEKQHS) has biased composition (basic and acidic residues).

It belongs to the protein kinase superfamily. Tyr protein kinase family. Insulin receptor subfamily. Interacts with plexA; component of a receptor complex that mediates the repulsive signaling in response to Semaphorin ligands.

It is found in the cell membrane. Its function is as follows. Acts as a calcium-dependent, homophilic cell adhesion molecule that regulates neural recognition during the development of the nervous system. Component of the repulsive Plexin signaling response to regulate motor axon guidance at the embryonic stage. Also component of a receptor complex that is required in the adult visual system to innervate the lamina layer; specific targeting of R1-R6 axons. In Drosophila yakuba (Fruit fly), this protein is Tyrosine-protein kinase-like otk.